Consider the following 368-residue polypeptide: tRNA-specific 2-thiouridylase MnmA (368 aa).

ATP is bound by residues 11–18 (GMSGGVDS) and M37. The interaction with target base in tRNA stretch occupies residues 97–99 (NPD). C102 serves as the catalytic Nucleophile. The cysteines at positions 102 and 199 are disulfide-linked. G127 is a binding site for ATP. The segment at 149–151 (KDQ) is interaction with tRNA. Catalysis depends on C199, which acts as the Cysteine persulfide intermediate. The segment at 311 to 312 (RY) is interaction with tRNA.

It belongs to the MnmA/TRMU family. Interacts with TusE.

Its subcellular location is the cytoplasm. The catalysed reaction is S-sulfanyl-L-cysteinyl-[protein] + uridine(34) in tRNA + AH2 + ATP = 2-thiouridine(34) in tRNA + L-cysteinyl-[protein] + A + AMP + diphosphate + H(+). Catalyzes the 2-thiolation of uridine at the wobble position (U34) of tRNA(Lys), tRNA(Glu) and tRNA(Gln), leading to the formation of s(2)U34, the first step of tRNA-mnm(5)s(2)U34 synthesis. Sulfur is provided by IscS, via a sulfur-relay system. Binds ATP and its substrate tRNAs. The sequence is that of tRNA-specific 2-thiouridylase MnmA from Shigella flexneri serotype 5b (strain 8401).